The chain runs to 324 residues: NADH-ubiquinone oxidoreductase chain 1 (324 aa).

9 helical membrane passes run L9–I29, P43–I63, F77–L97, L106–G126, I146–F166, T177–A197, L228–F248, Q259–I279, and F299–S319.

It belongs to the complex I subunit 1 family.

It localises to the mitochondrion inner membrane. It catalyses the reaction a ubiquinone + NADH + 5 H(+)(in) = a ubiquinol + NAD(+) + 4 H(+)(out). Core subunit of the mitochondrial membrane respiratory chain NADH dehydrogenase (Complex I) that is believed to belong to the minimal assembly required for catalysis. Complex I functions in the transfer of electrons from NADH to the respiratory chain. The immediate electron acceptor for the enzyme is believed to be ubiquinone. The polypeptide is NADH-ubiquinone oxidoreductase chain 1 (MT-ND1) (Scyliorhinus canicula (Small-spotted catshark)).